The following is a 143-amino-acid chain: Transcription antitermination protein NusB (143 aa).

It belongs to the NusB family.

Its function is as follows. Involved in transcription antitermination. Required for transcription of ribosomal RNA (rRNA) genes. Binds specifically to the boxA antiterminator sequence of the ribosomal RNA (rrn) operons. This Mannheimia succiniciproducens (strain KCTC 0769BP / MBEL55E) protein is Transcription antitermination protein NusB.